The following is a 428-amino-acid chain: Trigger factor (428 aa).

A PPIase FKBP-type domain is found at 163–248 (GDTVVIDFEG…VHEVKAKQLP (86 aa)).

Belongs to the FKBP-type PPIase family. Tig subfamily.

The protein resides in the cytoplasm. The catalysed reaction is [protein]-peptidylproline (omega=180) = [protein]-peptidylproline (omega=0). Its function is as follows. Involved in protein export. Acts as a chaperone by maintaining the newly synthesized protein in an open conformation. Functions as a peptidyl-prolyl cis-trans isomerase. This is Trigger factor from Geobacillus kaustophilus (strain HTA426).